The following is a 423-amino-acid chain: Diels-Alderase cheD (423 aa).

The first 18 residues, 1–18 (MKLCALFAGAVISTSAVA), serve as a signal peptide directing secretion. Residues N84 and N132 are each glycosylated (N-linked (GlcNAc...) asparagine).

Belongs to the Diels-Alderase family.

It participates in secondary metabolite biosynthesis. Its function is as follows. Diels-Alderase; part of the gene cluster that mediates the biosynthesis of chaetoglobosin A which has a unique inhibitory activity against actin polymerization in mammalian cells. Chaetoglobosin A and its intermediates are involved in the morphological differentiation of C.globosum. The first step of the pathway is the synthesis of prochaetoglobosin I via condensation of one acetyl-CoA, 8 malonyl-CoA, and a L-tryptophan molecule by the PKS-NRPS hybrid synthetase cheA, followed by reduction of backbone double bond to install desired geometry by the enoyl reductase cheB. Further multiple oxidation steps performed by the cytochrome P450 monooxygenases cheE and cheG, as well as by the FAD-linked oxidoreductase cheF, lead to the formation of chaetoglobosin A. Depending on the order of action of these reductases, distinct intermediates can be identified. Within the pathway, the cytochrome P450 monooxygenase cheE catalyzes a stereospecific epoxidation on prochaetoglobosin I, cytoglobosin D, and chaetoglobosin J intermediates. The FAD-linked oxidoreductase cheF performs dehydrogenation of the C-20 hydroxyl groups in the 20-dihyrochaetoglobosin A and cytoglobosin D intermediates. Finally, the cytochrome P450 monooxygenase cheG can catalyze the stereospecific dihydroxylation of prochaetoglobosin I and prochaetoglobosin IV at C-19 and C-20, respectively. The Diels-Alderase cheD may play a role in the post-PKS-NRPS biosynthetic steps catalyzing Diels-Alder cyclization. This Chaetomium globosum (strain ATCC 6205 / CBS 148.51 / DSM 1962 / NBRC 6347 / NRRL 1970) (Soil fungus) protein is Diels-Alderase cheD.